We begin with the raw amino-acid sequence, 384 residues long: MNRFTTSQGAFELARFPEHPRDPFRAWDAADDYLLQQLTDPGTGPVDLSGTVAVVGDRWGALATALAAHRPVQISDSYLARRATLANLARNGIDEDAVRLLSSRDTPPDRIDVLLVRVPKSLAFLEDQLHRLAPAVHSGTVVIGTGMVKEIHTSTLKIFERIIGPTRTSLAVRKARLIFSTPDPALPRTLSPWPYRYELPADVGPVAGLTAVNHAGIFCAERLDIGTRFFLKHLPTRSGAVRVVDLGCGNGVLGLSAAVANPDAHLTFVDESYGAVASAEETFRAGAPAGAKADFLVGDGLADLDPGSVDLVLNNPPFHSHLATTDATARTMFAGAKTALRRGGELWVVGNRHLSYHTHLRRIFGNCTTVAGDPKFVVLRAVKR.

It belongs to the methyltransferase superfamily. RlmG family.

It is found in the cytoplasm. The catalysed reaction is guanosine(1835) in 23S rRNA + S-adenosyl-L-methionine = N(2)-methylguanosine(1835) in 23S rRNA + S-adenosyl-L-homocysteine + H(+). Functionally, specifically methylates the guanine in position 1835 (m2G1835) of 23S rRNA. This chain is Ribosomal RNA large subunit methyltransferase G, found in Streptomyces griseus subsp. griseus (strain JCM 4626 / CBS 651.72 / NBRC 13350 / KCC S-0626 / ISP 5235).